The following is a 178-amino-acid chain: Cytochrome b6-f complex iron-sulfur subunit 3 (178 aa).

Residues 20 to 42 (FITGATVAVTAGAALYPAGKFLI) traverse the membrane as a helical segment. The Rieske domain occupies 65–161 (PASQILAEPP…VAVIDNSILI (97 aa)). Residues C107, H109, C125, and H128 each coordinate [2Fe-2S] cluster. A disulfide bond links C112 and C127.

This sequence belongs to the Rieske iron-sulfur protein family. The 4 large subunits of the cytochrome b6-f complex are cytochrome b6, subunit IV (17 kDa polypeptide, PetD), cytochrome f and the Rieske protein, while the 4 small subunits are PetG, PetL, PetM and PetN. The complex functions as a dimer. It depends on [2Fe-2S] cluster as a cofactor.

It localises to the cellular thylakoid membrane. The enzyme catalyses 2 oxidized [plastocyanin] + a plastoquinol + 2 H(+)(in) = 2 reduced [plastocyanin] + a plastoquinone + 4 H(+)(out). Functionally, component of the cytochrome b6-f complex, which mediates electron transfer between photosystem II (PSII) and photosystem I (PSI), cyclic electron flow around PSI, and state transitions. In Nostoc sp. (strain PCC 7120 / SAG 25.82 / UTEX 2576), this protein is Cytochrome b6-f complex iron-sulfur subunit 3.